The following is a 527-amino-acid chain: Zinc finger imprinted 2 (527 aa).

The span at 1–16 (MYQPEDDNNSDVTSDD) shows a compositional bias: acidic residues. The segment at 1 to 104 (MYQPEDDNNS…SRSQDAESYQ (104 aa)) is disordered. Basic and acidic residues-rich tracts occupy residues 17-26 (DMTRNRRESS), 35-56 (SGDR…DRWS), and 80-99 (FEMD…RSQD). One can recognise a KRAB domain in the interval 176–246 (VTFEDVLVDF…ETDSRHTVIC (71 aa)). Residues 247–322 (QGESHDDPLE…GICTSPQSAS (76 aa)) form a disordered region. Residues 259–275 (QGNQEKLLTPITMNDPK) show a composition bias toward polar residues. Over residues 297 to 307 (QSKDPLGKDPQ) the composition is skewed to basic and acidic residues. 5 consecutive C2H2-type zinc fingers follow at residues 328-350 (NRCE…ERIH), 356-378 (YECK…QKTH), 412-434 (FECF…LKAH), 466-488 (CQCC…YRTH), and 494-516 (YQCQ…YQLH).

The protein belongs to the krueppel C2H2-type zinc-finger protein family. Highest levels of expression in adult testis; modest levels in fetal kidney and brain.

It is found in the nucleus. Its function is as follows. May be involved in transcriptional regulation. This is Zinc finger imprinted 2 (ZIM2) from Homo sapiens (Human).